Reading from the N-terminus, the 181-residue chain is MVDLDEFEVVLEELVKEVKRRDTIAAVLISTSFVLFGFLALVLLNVIRLEEFMRGIVAIVSLIAIWVLMTAGVYILLSMPLPELPTRIVADSKGVMELMKRNYGGKIYITRQSYRNLPPKVGARMNLEIVDVSDEEVAKYLNHGVELAESIAAAKKLKAKVVSDRKMKVDGVEIIKAEDLF.

The next 2 helical transmembrane spans lie at 24 to 46 (IAAV…LLNV) and 55 to 77 (GIVA…YILL).

Its subcellular location is the cell membrane. This is an uncharacterized protein from Archaeoglobus fulgidus (strain ATCC 49558 / DSM 4304 / JCM 9628 / NBRC 100126 / VC-16).